We begin with the raw amino-acid sequence, 597 residues long: Elongation factor 4 (597 aa).

Positions 2-184 (KNIRNFSIIA…SIVEHLPAPE (183 aa)) constitute a tr-type G domain. Residues 14-19 (DHGKST) and 131-134 (NKID) each bind GTP.

Belongs to the TRAFAC class translation factor GTPase superfamily. Classic translation factor GTPase family. LepA subfamily.

The protein localises to the cell inner membrane. It catalyses the reaction GTP + H2O = GDP + phosphate + H(+). Functionally, required for accurate and efficient protein synthesis under certain stress conditions. May act as a fidelity factor of the translation reaction, by catalyzing a one-codon backward translocation of tRNAs on improperly translocated ribosomes. Back-translocation proceeds from a post-translocation (POST) complex to a pre-translocation (PRE) complex, thus giving elongation factor G a second chance to translocate the tRNAs correctly. Binds to ribosomes in a GTP-dependent manner. The sequence is that of Elongation factor 4 from Desulfotalea psychrophila (strain LSv54 / DSM 12343).